The primary structure comprises 272 residues: Ribonuclease 3 (272 aa).

The interval 1–22 is disordered; the sequence is MSLQFLRSEASDGAGETSDASS. Residues 31–162 form the RNase III domain; the sequence is TATHLARLTG…LVGAIYLDQG (132 aa). E75 provides a ligand contact to Mg(2+). D79 is a catalytic residue. Mg(2+)-binding residues include D148 and E151. Residue E151 is part of the active site. Residues 189-258 form the DRBM domain; it reads NYKSRLIEYT…AKEAMKRLES (70 aa).

This sequence belongs to the ribonuclease III family. In terms of assembly, homodimer. Requires Mg(2+) as cofactor.

The protein resides in the cytoplasm. It catalyses the reaction Endonucleolytic cleavage to 5'-phosphomonoester.. In terms of biological role, digests double-stranded RNA. Involved in the processing of primary rRNA transcript to yield the immediate precursors to the large and small rRNAs (23S and 16S). Processes some mRNAs, and tRNAs when they are encoded in the rRNA operon. Processes pre-crRNA and tracrRNA of type II CRISPR loci if present in the organism. This chain is Ribonuclease 3, found in Chlorobaculum tepidum (strain ATCC 49652 / DSM 12025 / NBRC 103806 / TLS) (Chlorobium tepidum).